Here is a 398-residue protein sequence, read N- to C-terminus: MAAGAGARPAPRWVKALGEPLSAAQLRRLEEHRYTAVGESLFEPPLQLYWTWLLQWIPLWMAPNTITLIGLAINLVTTLVLIFYCPTVTEEAPYWTYLLCALGLFIYQSLDAIDGKQARRTNSCSPLGELFDHGCDSLSTVFMAIGASIAVRLGTHPDWLFFCSFVGMFMFYCAHWQTYVSGVLRFGRVDVTEIQVALVIVFMLSTFGGATMWDYTIPILEIKLKIVPVLGVVGGLIFSCSNYFHVILHGGVGKNGSTIAGTSVLSPGLHIGLIIILAIMIYKKSATNMFEKHPCLYTLMFGCVFAKVAQKLVIAHMTKSELYLQDTVFIGPGLLFLDQYFNNFIDEYVVLWIAMVISSFDMMIYFTSLCLQISRHLHLNIFKTSCQQAPEQVYKHID.

Residue Ala2 is modified to N-acetylalanine. Over 2–62 (AAGAGARPAP…LLQWIPLWMA (61 aa)) the chain is Cytoplasmic. The chain crosses the membrane as a helical span at residues 63–83 (PNTITLIGLAINLVTTLVLIF). Residue Asn64 coordinates CDP-choline. Residues 84-93 (YCPTVTEEAP) are Lumenal-facing. A helical transmembrane segment spans residues 94–118 (YWTYLLCALGLFIYQSLDAIDGKQA). Positions 111 and 114 each coordinate Mg(2+). Position 119 (Arg119) interacts with CDP-choline. At 119 to 125 (RRTNSCS) the chain is on the cytoplasmic side. Residues 126-150 (PLGELFDHGCDSLSTVFMAIGASIA) form a helical membrane-spanning segment. A Mg(2+)-binding site is contributed by Asp132. The active-site Proton acceptor is His133. Asp136 lines the Mg(2+) pocket. At 151–160 (VRLGTHPDWL) the chain is on the lumenal side. A helical membrane pass occupies residues 161-179 (FFCSFVGMFMFYCAHWQTY). At 180 to 190 (VSGVLRFGRVD) the chain is on the cytoplasmic side. A helical transmembrane segment spans residues 191–207 (VTEIQVALVIVFMLSTF). Residues 208–222 (GGATMWDYTIPILEI) lie on the Lumenal side of the membrane. The chain crosses the membrane as a helical span at residues 223–248 (KLKIVPVLGVVGGLIFSCSNYFHVIL). The Cytoplasmic portion of the chain corresponds to 249 to 265 (HGGVGKNGSTIAGTSVL). A helical membrane pass occupies residues 266 to 281 (SPGLHIGLIIILAIMI). The Lumenal portion of the chain corresponds to 282–293 (YKKSATNMFEKH). Residues 294–316 (PCLYTLMFGCVFAKVAQKLVIAH) form a helical membrane-spanning segment. Topologically, residues 317–329 (MTKSELYLQDTVF) are cytoplasmic. The helical transmembrane segment at 330 to 339 (IGPGLLFLDQ) threads the bilayer. The Lumenal portion of the chain corresponds to 340 to 346 (YFNNFID). A helical membrane pass occupies residues 347–376 (EYVVLWIAMVISSFDMMIYFTSLCLQISRH). Residues 377 to 398 (LHLNIFKTSCQQAPEQVYKHID) are Cytoplasmic-facing.

It belongs to the CDP-alcohol phosphatidyltransferase class-I family. It depends on Mg(2+) as a cofactor. Mn(2+) serves as cofactor. In terms of tissue distribution, expressed in brain, heart, lung, liver, spleen, intestine and muscle. Down-regulated in kidney of type 2 diabetic KK/Ta mice.

Its subcellular location is the golgi apparatus membrane. The catalysed reaction is CDP-choline + a 1,2-diacyl-sn-glycerol = a 1,2-diacyl-sn-glycero-3-phosphocholine + CMP + H(+). The enzyme catalyses 1-octadecanoyl-2-(5Z,8Z,11Z,14Z-eicosatetraenoyl)-sn-glycerol + CDP-choline = 1-octadecanoyl-2-(5Z,8Z,11Z,14Z-eicosatetraenoyl)-sn-glycero-3-phosphocholine + CMP + H(+). It catalyses the reaction 1-hexadecanoyl-2-(9Z-octadecenoyl)-sn-glycerol + CDP-choline = 1-hexadecanoyl-2-(9Z-octadecenoyl)-sn-glycero-3-phosphocholine + CMP + H(+). It carries out the reaction 1-hexadecanoyl-2-(4Z,7Z,10Z,13Z,16Z,19Z-docosahexaenoyl)-sn-glycerol + CDP-choline = 1-hexadecanoyl-2-(4Z,7Z,10Z,13Z,16Z,19Z-docosahexaenoyl)-sn-glycero-3-phosphocholine + CMP + H(+). The catalysed reaction is 1,2-dioctanoyl-sn-glycerol + CDP-choline = 1,2-dioctanoyl-sn-glycero-3-phosphocholine + CMP + H(+). Its pathway is phospholipid metabolism; phosphatidylcholine biosynthesis; phosphatidylcholine from phosphocholine: step 2/2. Its function is as follows. Catalyzes the final step of de novo phosphatidylcholine (PC) synthesis, i.e. the transfer of choline phosphate from CDP-choline to the free hydroxyl of a diacylglycerol (DAG), producing a PC. It thereby plays a central role in the formation and maintenance of vesicular membranes. The protein is Cholinephosphotransferase 1 of Mus musculus (Mouse).